The sequence spans 282 residues: Transmembrane protein 41B (282 aa).

The tract at residues 1 to 36 (MAKKRAGNRETESSPLVEQEPRPSKETPVPKGAQSP) is disordered. A run of 6 helical transmembrane segments spans residues 43–63 (MSIL…YLVF), 102–122 (TQVL…AIPG), 138–160 (LALF…LSYL), 188–208 (LINY…FINI), 216–236 (PLGV…FVAI), and 251–271 (AVSW…ILPV). Positions 131 to 242 (GYLYPFPLAL…FVAINAGTTL (112 aa)) are VTT domain; required for its function in autophagy.

Belongs to the TMEM41 family.

The protein resides in the endoplasmic reticulum membrane. It is found in the endomembrane system. It catalyses the reaction a 1,2-diacyl-sn-glycero-3-phospho-L-serine(in) = a 1,2-diacyl-sn-glycero-3-phospho-L-serine(out). The catalysed reaction is cholesterol(in) = cholesterol(out). It carries out the reaction a 1,2-diacyl-sn-glycero-3-phosphocholine(in) = a 1,2-diacyl-sn-glycero-3-phosphocholine(out). The enzyme catalyses a 1,2-diacyl-sn-glycero-3-phosphoethanolamine(in) = a 1,2-diacyl-sn-glycero-3-phosphoethanolamine(out). Phospholipid scramblase involved in lipid homeostasis and membrane dynamics processes. Has phospholipid scramblase activity toward cholesterol and phosphatidylserine, as well as phosphatidylethanolamine and phosphatidylcholine. Required for autophagosome formation: participates in early stages of autophagosome biogenesis at the endoplasmic reticulum (ER) membrane by reequilibrating the leaflets of the ER as lipids are extracted by atg2 (atg2a or atg2b) to mediate autophagosome assembly. In addition to autophagy, involved in other processes in which phospholipid scramblase activity is required. Required for normal motor neuron development. The chain is Transmembrane protein 41B from Danio rerio (Zebrafish).